Consider the following 156-residue polypeptide: Small ribosomal subunit protein uS7 (156 aa).

It belongs to the universal ribosomal protein uS7 family. As to quaternary structure, part of the 30S ribosomal subunit. Contacts proteins S9 and S11.

Its function is as follows. One of the primary rRNA binding proteins, it binds directly to 16S rRNA where it nucleates assembly of the head domain of the 30S subunit. Is located at the subunit interface close to the decoding center, probably blocks exit of the E-site tRNA. The protein is Small ribosomal subunit protein uS7 of Clostridium kluyveri (strain NBRC 12016).